The sequence spans 216 residues: Ras-like protein (216 aa).

16-23 contributes to the GTP binding site; sequence GGGGVGKS. The short motif at 38–46 is the Effector region element; it reads YDPTIEDSY. GTP contacts are provided by residues 63–67 and 122–125; these read DTAGQ and NKCD. Residues Cys-209 and Cys-210 are each lipidated (S-palmitoyl cysteine). Cys-213 bears the Cysteine methyl ester mark. A lipid anchor (S-geranylgeranyl cysteine) is attached at Cys-213. A propeptide spans 214-216 (removed in mature form); the sequence is VVL.

Belongs to the small GTPase superfamily. Ras family.

It localises to the cell membrane. It catalyses the reaction GTP + H2O = GDP + phosphate + H(+). With respect to regulation, alternates between an inactive form bound to GDP and an active form bound to GTP. Activated by a guanine nucleotide-exchange factor (GEF) and inactivated by a GTPase-activating protein (GAP). This is Ras-like protein (RAS1) from Cryptococcus neoformans var. neoformans serotype D (strain B-3501A) (Filobasidiella neoformans).